The primary structure comprises 345 residues: Holliday junction branch migration complex subunit RuvB (345 aa).

The segment at 4–185 (TDRLIAPSTQ…FGIVSRLEFY (182 aa)) is large ATPase domain (RuvB-L). ATP-binding positions include L24, R25, G66, K69, T70, T71, 132–134 (EDY), R175, Y185, and R222. T70 provides a ligand contact to Mg(2+). The interval 186 to 256 (TADELARIVH…IADAALKMLD (71 aa)) is small ATPAse domain (RuvB-S). The interval 259–345 (KLGFDVMDRK…KIGTGELWQQ (87 aa)) is head domain (RuvB-H). Positions 295, 314, and 319 each coordinate DNA.

The protein belongs to the RuvB family. As to quaternary structure, homohexamer. Forms an RuvA(8)-RuvB(12)-Holliday junction (HJ) complex. HJ DNA is sandwiched between 2 RuvA tetramers; dsDNA enters through RuvA and exits via RuvB. An RuvB hexamer assembles on each DNA strand where it exits the tetramer. Each RuvB hexamer is contacted by two RuvA subunits (via domain III) on 2 adjacent RuvB subunits; this complex drives branch migration. In the full resolvosome a probable DNA-RuvA(4)-RuvB(12)-RuvC(2) complex forms which resolves the HJ.

The protein localises to the cytoplasm. The catalysed reaction is ATP + H2O = ADP + phosphate + H(+). Functionally, the RuvA-RuvB-RuvC complex processes Holliday junction (HJ) DNA during genetic recombination and DNA repair, while the RuvA-RuvB complex plays an important role in the rescue of blocked DNA replication forks via replication fork reversal (RFR). RuvA specifically binds to HJ cruciform DNA, conferring on it an open structure. The RuvB hexamer acts as an ATP-dependent pump, pulling dsDNA into and through the RuvAB complex. RuvB forms 2 homohexamers on either side of HJ DNA bound by 1 or 2 RuvA tetramers; 4 subunits per hexamer contact DNA at a time. Coordinated motions by a converter formed by DNA-disengaged RuvB subunits stimulates ATP hydrolysis and nucleotide exchange. Immobilization of the converter enables RuvB to convert the ATP-contained energy into a lever motion, pulling 2 nucleotides of DNA out of the RuvA tetramer per ATP hydrolyzed, thus driving DNA branch migration. The RuvB motors rotate together with the DNA substrate, which together with the progressing nucleotide cycle form the mechanistic basis for DNA recombination by continuous HJ branch migration. Branch migration allows RuvC to scan DNA until it finds its consensus sequence, where it cleaves and resolves cruciform DNA. The sequence is that of Holliday junction branch migration complex subunit RuvB from Methylobacillus flagellatus (strain ATCC 51484 / DSM 6875 / VKM B-1610 / KT).